Here is a 205-residue protein sequence, read N- to C-terminus: Large ribosomal subunit protein uL18 (205 aa).

It belongs to the universal ribosomal protein uL18 family. In terms of assembly, part of the 50S ribosomal subunit. Contacts the 5S and 23S rRNAs.

Its function is as follows. This is one of the proteins that bind and probably mediate the attachment of the 5S RNA into the large ribosomal subunit, where it forms part of the central protuberance. The protein is Large ribosomal subunit protein uL18 of Pyrobaculum islandicum (strain DSM 4184 / JCM 9189 / GEO3).